Consider the following 505-residue polypeptide: Maturase K (505 aa).

Belongs to the intron maturase 2 family. MatK subfamily.

It is found in the plastid. The protein localises to the chloroplast. Functionally, usually encoded in the trnK tRNA gene intron. Probably assists in splicing its own and other chloroplast group II introns. The polypeptide is Maturase K (Chiococca alba (West Indian milkberry)).